Consider the following 495-residue polypeptide: Tripartite motif-containing protein 5 (495 aa).

N-acetylalanine is present on Ala-2. Residues 15–60 form an RING-type zinc finger; the sequence is CPICLELLTEPLSLHCGHSFCQACITANHKKSMLYKEGERSCPVCR. Ser-87 bears the Phosphoserine mark. The segment at 92–133 adopts a B box-type zinc-finger fold; that stretch reads QKVDHCARHGEKLLLFCQEDRKVICWLCERSQEHRGHHTFLM. The Zn(2+) site is built by Cys-97, His-100, Cys-119, and His-125. A coiled-coil region spans residues 137–225; it reads AQEYHVKLQT…LTKSETEMVQ (89 aa). The segment at 187 to 200 is required for interaction with GABARAP and for autophagy; that stretch reads FEQLREILDWEESN. The B30.2/SPRY domain occupies 283–495; it reads LKGILDMFRE…VPMTLCSPSS (213 aa).

Belongs to the TRIM/RBCC family. Can form homodimers and homotrimers. In addition to lower-order dimerization, also exhibits a higher-order multimerization and both low- and high-order multimerizations are essential for its restriction activity. Interacts with BTBD1 and BTBD2. Interacts with PSMC4, PSMC5, PSMD7 and HSPA8/HSC70. Interacts (via B30.2/SPRY domain) with HSPA1A/B. Interacts with PSMC2, MAP3K7/TAK1, TAB2 and TAB3. Interacts with SQSTM1. Interacts with TRIM6 and TRIM34. Interacts with ULK1 (phosphorylated form), GABARAP, GABARAPL1, GABARAPL2, MAP1LC3A, MAP1LC3C and BECN1. Post-translationally, degraded in a proteasome-independent fashion in the absence of viral infection but in a proteasome-dependent fashion following exposure to restriction sensitive virus. Autoubiquitinated in a RING finger- and UBE2D2-dependent manner. Monoubiquitinated by TRIM21. Deubiquitinated by Yersinia YopJ. Ubiquitination may not lead to proteasomal degradation.

It is found in the cytoplasm. The protein localises to the nucleus. It carries out the reaction S-ubiquitinyl-[E2 ubiquitin-conjugating enzyme]-L-cysteine + [acceptor protein]-L-lysine = [E2 ubiquitin-conjugating enzyme]-L-cysteine + N(6)-ubiquitinyl-[acceptor protein]-L-lysine.. The protein operates within protein modification; protein ubiquitination. Its function is as follows. Capsid-specific restriction factor that prevents infection from non-host-adapted retroviruses. Blocks viral replication early in the life cycle, after viral entry but before reverse transcription. In addition to acting as a capsid-specific restriction factor, also acts as a pattern recognition receptor that activates innate immune signaling in response to the retroviral capsid lattice. Binding to the viral capsid triggers its E3 ubiquitin ligase activity, and in concert with the heterodimeric ubiquitin conjugating enzyme complex UBE2V1-UBE2N (also known as UBC13-UEV1A complex) generates 'Lys-63'-linked polyubiquitin chains, which in turn are catalysts in the autophosphorylation of the MAP3K7/TAK1 complex (includes TAK1, TAB2, and TAB3). Activation of the MAP3K7/TAK1 complex by autophosphorylation results in the induction and expression of NF-kappa-B and MAPK-responsive inflammatory genes, thereby leading to an innate immune response in the infected cell. Plays a role in regulating autophagy through activation of autophagy regulator BECN1 by causing its dissociation from its inhibitors BCL2 and TAB2. This is Tripartite motif-containing protein 5 (TRIM5) from Pygathrix nemaeus (Red-shanked douc langur).